The following is a 600-amino-acid chain: Putative dehydrogenase XoxF (600 aa).

A signal peptide spans 1-21; sequence MKNLMNGACLALLMSGTAALA. Residues Glu-192 and Asn-276 each coordinate Ca(2+). The Proton acceptor role is filled by Asp-318.

Belongs to the bacterial PQQ dehydrogenase family. Pyrroloquinoline quinone is required as a cofactor. The cofactor is Ca(2+).

In Paracoccus denitrificans, this protein is Putative dehydrogenase XoxF (xoxF).